The sequence spans 238 residues: Hydroxyacylglutathione hydrolase (238 aa).

Residues H52, H54, D56, H57, H108, D125, and H163 each coordinate Zn(2+).

It belongs to the metallo-beta-lactamase superfamily. Glyoxalase II family. Monomer. The cofactor is Zn(2+).

The catalysed reaction is an S-(2-hydroxyacyl)glutathione + H2O = a 2-hydroxy carboxylate + glutathione + H(+). It participates in secondary metabolite metabolism; methylglyoxal degradation; (R)-lactate from methylglyoxal: step 2/2. Functionally, thiolesterase that catalyzes the hydrolysis of S-D-lactoyl-glutathione to form glutathione and D-lactic acid. The chain is Hydroxyacylglutathione hydrolase from Haemophilus influenzae (strain ATCC 51907 / DSM 11121 / KW20 / Rd).